Reading from the N-terminus, the 525-residue chain is Tigger transposable element-derived protein 2 (525 aa).

In terms of domain architecture, HTH psq-type spans 1 to 52; that stretch reads MLGKRKRVVLTIKDKLDIIKKLEEGISFKKLSVVYGIGESTVRDIKKNKERI. 2 consecutive DNA-binding regions (H-T-H motif) follow at residues 28–48 and 100–132; these read FKKL…IKKN and TICA…FKQR. The 73-residue stretch at 67–139 folds into the HTH CENPB-type domain; that stretch reads KRKSMKSSTY…KQRHGIPKAA (73 aa). The DDE-1 domain maps to 168-385; it reads LQPEQIYGAD…VKSSTITKAW (218 aa). The interval 442 to 474 is disordered; that stretch reads QVLTDSESAEDQTKAAEQKPSSKSRKTELNPEK.

Belongs to the tigger transposable element derived protein family.

The protein resides in the nucleus. This is Tigger transposable element-derived protein 2 (TIGD2) from Homo sapiens (Human).